The primary structure comprises 677 residues: Probable sulfate transporter 4.2 (677 aa).

Topologically, residues 1 to 83 (MSLAVKDLST…RTYRWHQYFK (83 aa)) are cytoplasmic. The helical transmembrane segment at 84–104 (LDLMAGITVGIMLVPQAMSYA) threads the bilayer. Residues 105-108 (RLAG) lie on the Extracellular side of the membrane. Residues 109–129 (LQPIYGLYSSFVPVFVYAVFG) traverse the membrane as a helical segment. Residues 130–133 (SSRQ) lie on the Cytoplasmic side of the membrane. Residues 134-154 (LAVGPVALVSLLVSNALSGIV) form a helical membrane-spanning segment. Topologically, residues 155–161 (DPSEELY) are extracellular. Residues 162–182 (TELAILLALMVGIFESIMGFL) traverse the membrane as a helical segment. The Cytoplasmic segment spans residues 183 to 189 (RLGWLIR). A helical membrane pass occupies residues 190 to 210 (FISHSVISGFTTASAVVIGLS). At 211–241 (QLKYFLGYSVSRSSKIMPVIDSIIAGADQFK) the chain is on the extracellular side. A helical transmembrane segment spans residues 242 to 262 (WPPFLLGCTILVILLVMKHVG). Over 263 to 269 (KAKKELR) the chain is Cytoplasmic. The chain crosses the membrane as a helical span at residues 270–290 (FIRAAGPLTGLALGTIIAKVF). Topologically, residues 291–318 (HPPSITLVGDIPQGLPKFSFPKSFDHAK) are extracellular. Residues 319 to 339 (LLLPTSALITGVAILESVGIA) form a helical membrane-spanning segment. Residues 340–355 (KALAAKNRYELDSNSE) lie on the Cytoplasmic side of the membrane. A helical membrane pass occupies residues 356–376 (LFGLGVANIFGSLFSAYPTTG). At 377 to 392 (SFSRSAVNSESEAKTG) the chain is on the extracellular side. A helical membrane pass occupies residues 393–413 (LSGLVTGIIIGCSLLFLTPMF). The Cytoplasmic segment spans residues 414-420 (KFIPQCA). Residues 421-441 (LAAIVISAVSGLVDYEGAIFL) traverse the membrane as a helical segment. The Extracellular segment spans residues 442–459 (WRVDKRDFTLWTITSTTT). Residues 460-480 (LFFGIEIGVLIGVGFSLAFVI) traverse the membrane as a helical segment. Topologically, residues 481-677 (HESANPHIAV…LEEPLLSREK (197 aa)) are cytoplasmic. In terms of domain architecture, STAS spans 505-629 (QYPEAYTYNG…VRVHDAVQVC (125 aa)).

It belongs to the SLC26A/SulP transporter (TC 2.A.53) family.

Its subcellular location is the membrane. In terms of biological role, h(+)/sulfate cotransporter that may play a role in the regulation of sulfate assimilation. In Arabidopsis thaliana (Mouse-ear cress), this protein is Probable sulfate transporter 4.2 (SULTR4;2).